A 225-amino-acid chain; its full sequence is Ribonuclease 3 (225 aa).

Residues 7–132 (MKAFEARLGY…VIAAVYRDGG (126 aa)) form the RNase III domain. E45 contributes to the Mg(2+) binding site. D49 is a catalytic residue. D118 and E121 together coordinate Mg(2+). Residue E121 is part of the active site. A DRBM domain is found at 157 to 225 (DAKTALQEWA…AARKLLDSLD (69 aa)).

The protein belongs to the ribonuclease III family. Homodimer. It depends on Mg(2+) as a cofactor.

Its subcellular location is the cytoplasm. The catalysed reaction is Endonucleolytic cleavage to 5'-phosphomonoester.. Digests double-stranded RNA. Involved in the processing of primary rRNA transcript to yield the immediate precursors to the large and small rRNAs (23S and 16S). Processes some mRNAs, and tRNAs when they are encoded in the rRNA operon. Processes pre-crRNA and tracrRNA of type II CRISPR loci if present in the organism. In Ruegeria pomeroyi (strain ATCC 700808 / DSM 15171 / DSS-3) (Silicibacter pomeroyi), this protein is Ribonuclease 3.